The primary structure comprises 378 residues: Succinyl-diaminopimelate desuccinylase (378 aa).

Histidine 67 serves as a coordination point for Zn(2+). Residue aspartate 69 is part of the active site. Aspartate 100 is a Zn(2+) binding site. The Proton acceptor role is filled by glutamate 134. Glutamate 135, glutamate 163, and histidine 349 together coordinate Zn(2+).

This sequence belongs to the peptidase M20A family. DapE subfamily. Homodimer. Requires Zn(2+) as cofactor. Co(2+) serves as cofactor.

The catalysed reaction is N-succinyl-(2S,6S)-2,6-diaminopimelate + H2O = (2S,6S)-2,6-diaminopimelate + succinate. The protein operates within amino-acid biosynthesis; L-lysine biosynthesis via DAP pathway; LL-2,6-diaminopimelate from (S)-tetrahydrodipicolinate (succinylase route): step 3/3. Its function is as follows. Catalyzes the hydrolysis of N-succinyl-L,L-diaminopimelic acid (SDAP), forming succinate and LL-2,6-diaminopimelate (DAP), an intermediate involved in the bacterial biosynthesis of lysine and meso-diaminopimelic acid, an essential component of bacterial cell walls. In Pasteurella multocida (strain Pm70), this protein is Succinyl-diaminopimelate desuccinylase.